A 396-amino-acid chain; its full sequence is GPN-loop GTPase 1 (396 aa).

Residues 1–13 (MSETTATSTTTTK) are compositionally biased toward low complexity. A disordered region spans residues 1-30 (MSETTATSTTTTKTTDKDNVNNNNNNENKE). 44–49 (GSGKTT) contributes to the GTP binding site. Positions 101 to 103 (GPN) match the Gly-Pro-Asn (GPN)-loop; involved in dimer interface motif. 204–207 (NKID) is a GTP binding site. Residues 284–387 (YKADLEKIKK…ERLEDQRAYE (104 aa)) adopt a coiled-coil conformation. Positions 325–342 (DFKKEKKRENQEKTKNIY) are enriched in basic and acidic residues. The disordered stretch occupies residues 325–396 (DFKKEKKREN…ESLMSSIKKI (72 aa)). A compositionally biased stretch (acidic residues) spans 343–380 (DDEEDDYRDDRDMEDSGEYESYEDEQEEGDYENEEERL).

The protein belongs to the GPN-loop GTPase family. In terms of assembly, heterodimer with gpn3. Binds to RNA polymerase II (RNAPII).

The protein localises to the cytoplasm. Its subcellular location is the nucleus. Functionally, small GTPase required for proper nuclear import of RNA polymerase II (RNAPII). May act at an RNAP assembly step prior to nuclear import. In Dictyostelium discoideum (Social amoeba), this protein is GPN-loop GTPase 1 (gpn1).